The following is a 1267-amino-acid chain: DNA-directed RNA polymerase subunit beta (1267 aa).

This sequence belongs to the RNA polymerase beta chain family. The RNAP catalytic core consists of 2 alpha, 1 beta, 1 beta' and 1 omega subunit. When a sigma factor is associated with the core the holoenzyme is formed, which can initiate transcription.

The catalysed reaction is RNA(n) + a ribonucleoside 5'-triphosphate = RNA(n+1) + diphosphate. DNA-dependent RNA polymerase catalyzes the transcription of DNA into RNA using the four ribonucleoside triphosphates as substrates. This chain is DNA-directed RNA polymerase subunit beta (rpoB), found in Carsonella ruddii (strain PV).